We begin with the raw amino-acid sequence, 258 residues long: Acetylglutamate kinase (258 aa).

Residues Gly41 to Gly42, Arg63, and Asn156 contribute to the substrate site.

Belongs to the acetylglutamate kinase family. ArgB subfamily.

It localises to the cytoplasm. The catalysed reaction is N-acetyl-L-glutamate + ATP = N-acetyl-L-glutamyl 5-phosphate + ADP. It participates in amino-acid biosynthesis; L-arginine biosynthesis; N(2)-acetyl-L-ornithine from L-glutamate: step 2/4. Catalyzes the ATP-dependent phosphorylation of N-acetyl-L-glutamate. In Bacillus licheniformis (strain ATCC 14580 / DSM 13 / JCM 2505 / CCUG 7422 / NBRC 12200 / NCIMB 9375 / NCTC 10341 / NRRL NRS-1264 / Gibson 46), this protein is Acetylglutamate kinase.